We begin with the raw amino-acid sequence, 412 residues long: Motilin receptor (412 aa).

The Extracellular segment spans residues 1–35; that stretch reads MGSPWNGSDGPEGAREPPWPALPPCDERRCSPFPL. Asn-6 carries N-linked (GlcNAc...) asparagine glycosylation. A helical membrane pass occupies residues 36–56; that stretch reads GALVPVTAVCLCLFVVGVSGN. The Cytoplasmic segment spans residues 57–74; it reads VVTVMLIGRYRDMRTTTN. A helical transmembrane segment spans residues 75-94; sequence LYLGSMAVSDLLILLGLPFD. Topologically, residues 95–112 are extracellular; it reads LYRLWRSRPWVFGPLLCR. The cysteines at positions 111 and 235 are disulfide-linked. A helical transmembrane segment spans residues 113–134; the sequence is LSLYVGEGCTYATLLHMTALSV. The Cytoplasmic portion of the chain corresponds to 135–157; the sequence is ERYLAICRPLRARVLVTRRRVRA. The chain crosses the membrane as a helical span at residues 158-178; the sequence is LIAVLWAVALLSAGPFLFLVG. Over 179–246 the chain is Extracellular; that stretch reads VEQDPGISVV…PSPAQLGALR (68 aa). N-linked (GlcNAc...) asparagine glycosylation occurs at Asn-192. A helical membrane pass occupies residues 247–270; it reads VMLWVTTAYFFLPFLCLSILYGLI. At 271–298 the chain is on the cytoplasmic side; sequence GRELWSSRRPLRGPAASGRERGHRQTVR. Residues 299-320 form a helical membrane-spanning segment; the sequence is VLLVVVLAFIICWLPFHVGRII. At 321–334 the chain is on the extracellular side; sequence YINTEDSRMMYFSQ. Residues 335 to 358 form a helical membrane-spanning segment; it reads YFNIVALQLFYLSASINPILYNLI. Residues 359–412 are Cytoplasmic-facing; the sequence is SKKYRAAAFKLLLARKSRPRGFHRSRDTAGEVAGDTGGDTVGYTETSANVKTMG.

Belongs to the G-protein coupled receptor 1 family. Expressed only in thyroid, stomach, and bone marrow.

The protein localises to the cell membrane. In terms of biological role, receptor for motilin. In Homo sapiens (Human), this protein is Motilin receptor (MLNR).